We begin with the raw amino-acid sequence, 815 residues long: Phosphatidylinositol 4-phosphate 5-kinase 9 (815 aa).

MORN repeat units lie at residues 58 to 80 (YSGSLLGNVPEGPGKYIWSDGCV), 81 to 103 (YDGEWRRGMRHGIGNMRWASGAS), 104 to 126 (YDGEFSGGYMHGSGTYVDANKLT), 127 to 149 (YKGRWRLNLKHGLGYQVYPNGDV), 150 to 172 (FEGSWIQGLGEGPGKYTWANKNV), 173 to 195 (YLGDMKGGKMSGKGTLTWVTGDS), 196 to 218 (YEGSWLNGMMHGVGVYTWSDGGC), and 219 to 240 (YVGTWTRGLKDGKGSFYSAGTR). Residues 391–809 (GHRSYDLMLS…RFLEFIKKVF (419 aa)) enclose the PIPK domain. The interval 769–790 (YNMTKKIEHAYKSLHFDSLSIS) is activation loop.

As to quaternary structure, interacts with CINV1. In terms of tissue distribution, widely expressed.

The protein resides in the membrane. It localises to the nucleus. It carries out the reaction a 1,2-diacyl-sn-glycero-3-phospho-(1D-myo-inositol 4-phosphate) + ATP = a 1,2-diacyl-sn-glycero-3-phospho-(1D-myo-inositol-4,5-bisphosphate) + ADP + H(+). Functionally, plays a role in sugar-mediated root development. Interaction with CINV1 induces repression of CINV1 activity and negative regulation of sugar-mediated root cell elongation. This chain is Phosphatidylinositol 4-phosphate 5-kinase 9 (PIP5K9), found in Arabidopsis thaliana (Mouse-ear cress).